We begin with the raw amino-acid sequence, 433 residues long: Histidinol dehydrogenase homolog (433 aa).

2 residues coordinate Zn(2+): Gln249 and His252. Residues Glu319 and His320 each act as proton acceptor in the active site. Positions 353 and 412 each coordinate Zn(2+).

It belongs to the histidinol dehydrogenase family. Zn(2+) is required as a cofactor.

This Ruegeria pomeroyi (strain ATCC 700808 / DSM 15171 / DSS-3) (Silicibacter pomeroyi) protein is Histidinol dehydrogenase homolog.